The following is a 591-amino-acid chain: MSAYRSHTCGELTAAAAGSEIRLSGWVHRVRDHGGVLFIDLRDHYGITQVIADSDSLAFAALEKLRAETVIRIDGRVKLRDPSLVNPKLPTGEIEVYATAMEVLGAADDLPLPVFGDQDYPEETRLTYRFLDLRRESLHNNIMLRSRVVKWLRDAMWDQGFTEFQTPIITASSPEGARDFLVPSRLHPGKFYALPQAPQQFKQLIMVAGFDKYFQIAPCFRDEDPRADRSPTDFYQLDLEMSFVEQEDVFRAIQPVIQGLFEEFGGGRRVDTDWPRIPYAEAMLKYGSDKPDLRNPIEMQVVSDHFRGSGFAIFAKLLEQDGTEVRAIPAPGGGSRKFADRMNAFAQGQGLPGMGYIFWRKAEDGTTEAAGPIAKALGPEKTEAIRTQLGLGEGDAAFFLGGKPETFEAVAGRARNEIGRELGLIDENQFKFAWIVDFPMYEKGEDGRIDFSHNPFSMPQGGLDALEGDPLAVMGYQYDLACNGYELVSGAIRNHRPEIMFRAFELAGYGRDEVEKRFGGMVKAFRYGAPPHGGCAAGIDRIVMLLADEVNIREVIMFPMNQRAEDLMMGAPSEPTNEQLRELRLRVLPRE.

E175 serves as a coordination point for L-aspartate. The segment at 199–202 (QQFK) is aspartate. Residues R221 and H453 each coordinate L-aspartate. 221–223 (RDE) contacts ATP. Position 486 (E486) interacts with ATP. An L-aspartate-binding site is contributed by R493. ATP is bound at residue 538–541 (GIDR).

It belongs to the class-II aminoacyl-tRNA synthetase family. Type 1 subfamily. In terms of assembly, homodimer.

It localises to the cytoplasm. It carries out the reaction tRNA(Asx) + L-aspartate + ATP = L-aspartyl-tRNA(Asx) + AMP + diphosphate. Aspartyl-tRNA synthetase with relaxed tRNA specificity since it is able to aspartylate not only its cognate tRNA(Asp) but also tRNA(Asn). Reaction proceeds in two steps: L-aspartate is first activated by ATP to form Asp-AMP and then transferred to the acceptor end of tRNA(Asp/Asn). The chain is Aspartate--tRNA(Asp/Asn) ligase from Paracoccus denitrificans (strain Pd 1222).